Reading from the N-terminus, the 480-residue chain is Immune evasion protein OPG047 (480 aa).

Positions 10 to 90 constitute a BTB domain; it reads CKNILALSMT…SYTGKVYIDS (81 aa). The BACK domain maps to 125–223; it reads CVECYMMGIE…NYLSPRGINN (99 aa). Kelch repeat units follow at residues 273-319, 320-363, 365-408, 410-447, and 448-480; these read VVYL…PANN, KLYV…SINN, IYVM…VFGR, LFLVGRNAEFYCESSNTWTLIDDPIYPRDNPELIIVDN, and KLLLIGGFYRGSYIDTIEVYNHHTYSWNIWDGK.

The protein belongs to the orthopoxvirus OPG047 family.

Its function is as follows. Might have a role in the suppression of host immune response. The protein is Immune evasion protein OPG047 (OPG047) of Vaccinia virus (strain Copenhagen) (VACV).